A 176-amino-acid chain; its full sequence is dCTP deaminase (176 aa).

DCTP-binding positions include 99-104 (RSTLAR) and Asp115. Glu125 acts as the Proton donor/acceptor in catalysis. Gln163 is a dCTP binding site.

The protein belongs to the dCTP deaminase family. As to quaternary structure, homotrimer.

The enzyme catalyses dCTP + H2O + H(+) = dUTP + NH4(+). It functions in the pathway pyrimidine metabolism; dUMP biosynthesis; dUMP from dCTP (dUTP route): step 1/2. In terms of biological role, catalyzes the deamination of dCTP to dUTP. The sequence is that of dCTP deaminase from Pyrobaculum calidifontis (strain DSM 21063 / JCM 11548 / VA1).